Consider the following 90-residue polypeptide: Large ribosomal subunit protein bL31 (90 aa).

The interval 65–90 (YSKQEGSGSKSNKSKSTKSKKGKGKK) is disordered. Over residues 76-90 (NKSKSTKSKKGKGKK) the composition is skewed to basic residues.

Belongs to the bacterial ribosomal protein bL31 family. Type A subfamily. As to quaternary structure, part of the 50S ribosomal subunit.

Its function is as follows. Binds the 23S rRNA. This Trichodesmium erythraeum (strain IMS101) protein is Large ribosomal subunit protein bL31.